The following is a 144-amino-acid chain: Cystatin-F (144 aa).

The first 18 residues, 1–18 (MWLAILLALCCLTSDTHG), serve as a signal peptide directing secretion. N-linked (GlcNAc...) asparagine glycosylation is present at N61. Positions 80–84 (QVVKG) match the Secondary area of contact motif. 2 disulfide bridges follow: C98-C109 and C123-C143.

The protein belongs to the cystatin family.

It localises to the secreted. Inhibits papain and cathepsin L but with affinities lower than other cystatins. May play a role in immune regulation through inhibition of a unique target in the hematopoietic system. The chain is Cystatin-F (Cst7) from Mus musculus (Mouse).